The sequence spans 691 residues: Dipeptidyl-peptidase 5 (691 aa).

The first 20 residues, 1 to 20 (MKRTILSLLAAVSLAIPVYA), serve as a signal peptide directing secretion. Residues S549, D634, and H666 each act as charge relay system in the active site.

It belongs to the peptidase S9C family. Homodimer.

It localises to the periplasm. Its function is as follows. Catalyzes the removal of dipeptides from the N-terminus of oligopeptides. Prefers Ala and hydrophobic residues at the P1 position, and has no preference for P2 residues. Shows the highest dipeptidyl peptidase activity toward the synthetic substrate Lys-Ala-methylcoumaryl-7-amide (Lys-Ala-MCA). Is likely involved in amino acid metabolism and bacterial growth/survival of asaccharolytic P.endodontalis, that utilizes amino acids from extracellular proteinaceous nutrients as energy and carbon sources. The polypeptide is Dipeptidyl-peptidase 5 (Porphyromonas endodontalis (strain ATCC 35406 / DSM 24491 / JCM 8526 / CCUG 16442 / BCRC 14492 / NCTC 13058 / HG 370) (Bacteroides endodontalis)).